A 1245-amino-acid polypeptide reads, in one-letter code: MGYFQMTRNVEEIFGGVVVAPHQIPFKYTSTNGGETFLSLPFYPITGFVTINSGVQVPIDNFEIDGNTLNLGRELEPGDVVFCLFDKIMSPQDASNNAVRIYKFLSVGGETEFTPDFTAYGVQSLYIDGKYKTPGEDYNYFKTSGKVVLDTALPTGVWVVAEMSIKQNIPALAGNNGASEIGTNSGKSLAESLGTWIDTTIAIFEMTEAPSVIQTRGFYETNDGGAGVWVATGIISPSLAGTHVPSQAKVYNAGGVEYQLNVKSGFEISAKANGVKAVDDVNAETEDFVCLGEAINGITSRVKTMVNDEDLKTYLKVIIPSEYPLRIGKTSIKAYSRLKLDFQQASIYDRPSPSNRQEVTGVYMNAIERGIEDVRAISARFGGATSYSNMTLSDFHIEGGKFYGDHTTDKGVADCSTGTGLFTYNMENSSIRNTWFQGFACGRQYNRTGPGYYFDNLGNKVVGTLVPEVTSSGTGSYEGVKEWSVTAYGCRYLYLRVLSNWARFDNCKFGTYANWSSSPDGNQCEYFIENRGAGVVFSGGVIEANTAAANPTKGFVRDYARGCTFEGVYYENCLSAGWVIAIPEKSQYNRANGLFLTAIGSQFTLSSQGAPLVKFEEGYFGSYNPATGLYKTGGWETNYQYAGGVNTWAVGQPELDSGAFPHGGYDFKYGTYGIHYSGSVPDADSLRDTQEGNEFLSPYGLSVNSGILLFPTLSPAYQSNIVVWYKDLTGNFDPRNIVVGDFDNNNVSDGTSNALYRTNGFNYYDYGNGYKAAIVPYVNPRALDNRMTTSAGRKLKITVTSDAPIILKSIQAFVGGTPIFPPAIKDYVPRSQRDRIWGTMSAGSTDSGAYYGPLVGGGIFRPGDVVLPFVPFGNAALMNPASYTDNSSGFGASAETAVITGGATWGAGLAGATFTLTVESQDTINNWTTVSVPSAYLPYIFTGMPVYITANSSGGSTGLINTVRRVVNSDGTLSNKYVLYGALGAAGTTLTVSTTSSYTVRSGVSSTLTGVSGSFSASSWLGTASGDLRVGFGASGSGTRQTRYYYNGADVSAVVGSSGANALHLTGTGGITLNGSLLTSTSYSFGSASAYPANIYSQNAVTVVSDVHYKMDIVELNDAEIECAKACAKLYRRYKLKTAVAIKGEDGARYHVGTIAQLVMQAFTDAGLDWTKYGIITYESWEASDAVVETVGAVYDEEGNELVPETIMVVTPAKEAGEIYMVRYDEFNSFVMAGQEARLQALEEK.

Residues 1105–1245 (SDVHYKMDIV…EARLQALEEK (141 aa)) enclose the Peptidase S74 domain.

Post-translationally, proteolytic cleavage and release of the chaperone in the host cytosol stabilizes the folded protein. The cleavage gives rise to the mature tail spike protein but is not essential for catalytic activity.

It localises to the virion. Its function is as follows. Functions as a receptor binding protein (RBP) and probably mediates the attachment to the host capsular exopolysaccharides. Displays a depolymerase activity that specifically degrades the KN2-type polysaccharides of Klebsiella pneumoniae capsule. In terms of biological role, the C-terminal chaperone protein mediates homotrimerization and proper folding of the catalytic trimer. The polypeptide is Probable tail spike protein (Klebsiella (Taipeivirus 0507KN21)).